Here is a 942-residue protein sequence, read N- to C-terminus: Isoleucine--tRNA ligase (942 aa).

The short motif at 58 to 68 (PYVNGSIHLGH) is the 'HIGH' region element. Glutamate 564 is an L-isoleucyl-5'-AMP binding site. The 'KMSKS' region signature appears at 605–609 (KMSKS). Residue lysine 608 coordinates ATP. Zn(2+)-binding residues include cysteine 905, cysteine 908, cysteine 925, and cysteine 928.

This sequence belongs to the class-I aminoacyl-tRNA synthetase family. IleS type 1 subfamily. As to quaternary structure, monomer. Zn(2+) serves as cofactor.

Its subcellular location is the cytoplasm. It catalyses the reaction tRNA(Ile) + L-isoleucine + ATP = L-isoleucyl-tRNA(Ile) + AMP + diphosphate. Its function is as follows. Catalyzes the attachment of isoleucine to tRNA(Ile). As IleRS can inadvertently accommodate and process structurally similar amino acids such as valine, to avoid such errors it has two additional distinct tRNA(Ile)-dependent editing activities. One activity is designated as 'pretransfer' editing and involves the hydrolysis of activated Val-AMP. The other activity is designated 'posttransfer' editing and involves deacylation of mischarged Val-tRNA(Ile). The protein is Isoleucine--tRNA ligase of Blochmanniella pennsylvanica (strain BPEN).